Consider the following 287-residue polypeptide: MFKINPIFKKTKYITINTSKDNNINKENIPNIPEGMWVKCDRCGKTLYKKDLDENLKVCKFCNKHYRMNAWERIDLIVDTGTFREFGENITSKNPLDFSGYEDKLKGIKEKTKLKEGVITGKGKIYGKNVVIAVMDSRFMMGSMGSAVGEKITRAVEKATEERLPIIIFTTSGGARMQESMFSLMQMAKTSAAIARHNEAGLLYIPVLTDPTTGGVIASFAMLGDIILSEPGTLIGFAGRRVIEQTIKQKLPDDFQSAEFLLEHGFLDKIVNRNELKKVLYKILELH.

In terms of domain architecture, CoA carboxyltransferase N-terminal spans 36 to 287 (MWVKCDRCGK…KVLYKILELH (252 aa)). C40, C43, C59, and C62 together coordinate Zn(2+). Residues 40-62 (CDRCGKTLYKKDLDENLKVCKFC) form a C4-type zinc finger.

The protein belongs to the AccD/PCCB family. Acetyl-CoA carboxylase is a heterohexamer composed of biotin carboxyl carrier protein (AccB), biotin carboxylase (AccC) and two subunits each of ACCase subunit alpha (AccA) and ACCase subunit beta (AccD). Zn(2+) is required as a cofactor.

Its subcellular location is the cytoplasm. It catalyses the reaction N(6)-carboxybiotinyl-L-lysyl-[protein] + acetyl-CoA = N(6)-biotinyl-L-lysyl-[protein] + malonyl-CoA. It participates in lipid metabolism; malonyl-CoA biosynthesis; malonyl-CoA from acetyl-CoA: step 1/1. Functionally, component of the acetyl coenzyme A carboxylase (ACC) complex. Biotin carboxylase (BC) catalyzes the carboxylation of biotin on its carrier protein (BCCP) and then the CO(2) group is transferred by the transcarboxylase to acetyl-CoA to form malonyl-CoA. The chain is Acetyl-coenzyme A carboxylase carboxyl transferase subunit beta from Clostridium novyi (strain NT).